The chain runs to 409 residues: Epoxyqueuosine reductase (409 aa).

Positions 1 to 23 are disordered; the sequence is MDRNPELAIADARPSQDGRAAPS. The active-site Proton donor is Asp-178. The region spanning 232–261 is the 4Fe-4S ferredoxin-type domain; sequence AAPETPGAHCGSCTRCLGACPTGAIVAPYR. Residues Cys-241, Cys-244, Cys-247, Cys-251, Cys-267, Cys-294, Cys-297, and Cys-301 each coordinate [4Fe-4S] cluster.

It belongs to the QueG family. In terms of assembly, monomer. Cob(II)alamin serves as cofactor. The cofactor is [4Fe-4S] cluster.

It localises to the cytoplasm. The enzyme catalyses epoxyqueuosine(34) in tRNA + AH2 = queuosine(34) in tRNA + A + H2O. It functions in the pathway tRNA modification; tRNA-queuosine biosynthesis. Catalyzes the conversion of epoxyqueuosine (oQ) to queuosine (Q), which is a hypermodified base found in the wobble positions of tRNA(Asp), tRNA(Asn), tRNA(His) and tRNA(Tyr). The chain is Epoxyqueuosine reductase from Burkholderia pseudomallei (strain K96243).